The sequence spans 254 residues: Imidazole glycerol phosphate synthase subunit HisF (254 aa).

Residues Asp14 and Asp133 contribute to the active site.

Belongs to the HisA/HisF family. As to quaternary structure, heterodimer of HisH and HisF.

It localises to the cytoplasm. The enzyme catalyses 5-[(5-phospho-1-deoxy-D-ribulos-1-ylimino)methylamino]-1-(5-phospho-beta-D-ribosyl)imidazole-4-carboxamide + L-glutamine = D-erythro-1-(imidazol-4-yl)glycerol 3-phosphate + 5-amino-1-(5-phospho-beta-D-ribosyl)imidazole-4-carboxamide + L-glutamate + H(+). The protein operates within amino-acid biosynthesis; L-histidine biosynthesis; L-histidine from 5-phospho-alpha-D-ribose 1-diphosphate: step 5/9. Functionally, IGPS catalyzes the conversion of PRFAR and glutamine to IGP, AICAR and glutamate. The HisF subunit catalyzes the cyclization activity that produces IGP and AICAR from PRFAR using the ammonia provided by the HisH subunit. In Nitratiruptor sp. (strain SB155-2), this protein is Imidazole glycerol phosphate synthase subunit HisF.